Reading from the N-terminus, the 379-residue chain is Alkanesulfonate monooxygenase (379 aa).

The protein belongs to the SsuD family.

It carries out the reaction an alkanesulfonate + FMNH2 + O2 = an aldehyde + FMN + sulfite + H2O + 2 H(+). In terms of biological role, catalyzes the desulfonation of aliphatic sulfonates. In Sorangium cellulosum (strain So ce56) (Polyangium cellulosum (strain So ce56)), this protein is Alkanesulfonate monooxygenase.